Reading from the N-terminus, the 290-residue chain is NH(3)-dependent NAD(+) synthetase (290 aa).

Position 33–40 (33–40) interacts with ATP; sequence GVSGGVDS. D39 provides a ligand contact to Mg(2+). R154 serves as a coordination point for deamido-NAD(+). Residue T174 coordinates ATP. E179 provides a ligand contact to Mg(2+). Deamido-NAD(+) is bound by residues K187 and D194. K203 and S225 together coordinate ATP.

The protein belongs to the NAD synthetase family. Homodimer.

The enzyme catalyses deamido-NAD(+) + NH4(+) + ATP = AMP + diphosphate + NAD(+) + H(+). Its pathway is cofactor biosynthesis; NAD(+) biosynthesis; NAD(+) from deamido-NAD(+) (ammonia route): step 1/1. Catalyzes the ATP-dependent amidation of deamido-NAD to form NAD. Uses ammonia as a nitrogen source. This Thermotoga neapolitana (strain ATCC 49049 / DSM 4359 / NBRC 107923 / NS-E) protein is NH(3)-dependent NAD(+) synthetase.